The primary structure comprises 192 residues: Small ribosomal subunit protein uS5 (192 aa).

Residues 20–83 form the S5 DRBM domain; the sequence is FVDKLVHINR…EAAKRGLIRV (64 aa). A disordered region spans residues 162 to 192; the sequence is SVAARRGLKVSALQARRRDADPADTSDAAVA.

The protein belongs to the universal ribosomal protein uS5 family. In terms of assembly, part of the 30S ribosomal subunit. Contacts proteins S4 and S8.

In terms of biological role, with S4 and S12 plays an important role in translational accuracy. Located at the back of the 30S subunit body where it stabilizes the conformation of the head with respect to the body. This chain is Small ribosomal subunit protein uS5, found in Methylorubrum populi (strain ATCC BAA-705 / NCIMB 13946 / BJ001) (Methylobacterium populi).